Here is a 440-residue protein sequence, read N- to C-terminus: Glycerophosphocholine cholinephosphodiesterase ENPP6 (440 aa).

The signal sequence occupies residues 1 to 22 (MAGKLWTFLLLFGFSWVWPASA). Positions 32, 71, and 92 each coordinate substrate. Asp-32 and Ser-71 together coordinate Zn(2+). Ser-71 functions as the Nucleophile in the catalytic mechanism. Ser-71 is subject to Phosphoserine. Residues Asn-100 and Asn-118 are each glycosylated (N-linked (GlcNAc...) asparagine). Cys-142 and Cys-154 are joined by a disulfide. A substrate-binding site is contributed by Asp-193. Zn(2+)-binding residues include Asp-193, His-197, Asp-240, and His-241. Residue His-241 participates in substrate binding. A glycan (N-linked (GlcNAc...) asparagine) is linked at Asn-341. Position 354 (His-354) interacts with substrate. His-354 lines the Zn(2+) pocket. An N-linked (GlcNAc...) asparagine glycan is attached at Asn-404. Ser-419 carries the GPI-anchor amidated serine lipid modification. The propeptide at 420-440 (SSPSIPPNSCALVLILLLYFV) is removed in mature form.

Belongs to the nucleotide pyrophosphatase/phosphodiesterase family. In terms of assembly, homodimer; disulfide-linked. Homotetramer. It depends on Zn(2+) as a cofactor.

It is found in the cell membrane. It catalyses the reaction sn-glycerol 3-phosphocholine + H2O = phosphocholine + glycerol + H(+). The enzyme catalyses a 1-acyl-sn-glycero-3-phosphocholine + H2O = a 1-acyl-sn-glycerol + phosphocholine + H(+). It carries out the reaction a 1-O-alkyl-sn-glycero-3-phosphocholine + H2O = a 1-O-alkyl-sn-glycerol + phosphocholine + H(+). The catalysed reaction is 1-dodecanoyl-sn-glycero-3-phosphocholine + H2O = 1-dodecanoyl-sn-glycerol + phosphocholine + H(+). It catalyses the reaction 1-hexadecanoyl-sn-glycero-3-phosphocholine + H2O = 1-hexadecanoyl-sn-glycerol + phosphocholine + H(+). The enzyme catalyses 1-(5Z,8Z,11Z,14Z-eicosatetraenoyl)-sn-glycero-3-phosphocholine + H2O = 1-(5Z,8Z,11Z,14Z-eicosatetraenoyl)-sn-glycerol + phosphocholine + H(+). It carries out the reaction 1-tetradecanoyl-sn-glycero-3-phosphocholine + H2O = 1-tetradecanoyl-sn-glycerol + phosphocholine + H(+). The catalysed reaction is sphing-4-enine-phosphocholine + H2O = sphing-4-enine + phosphocholine + H(+). It catalyses the reaction 1-(9Z-octadecenoyl)-sn-glycero-3-phosphocholine + H2O = 1-(9Z-octadecenoyl)-sn-glycerol + phosphocholine + H(+). The enzyme catalyses 1-(9Z,12Z)-octadecadienoyl-sn-glycero-3-phosphocholine + H2O = 1-(9Z,12Z-octadecadienoyl)-sn-glycerol + phosphocholine + H(+). It carries out the reaction glycero-2-phosphocholine + H2O = phosphocholine + glycerol + H(+). Its activity is regulated as follows. Inhibited by EDTA and EGTA in vitro. Its function is as follows. Choline-specific glycerophosphodiesterase that hydrolyzes glycerophosphocholine (GPC) and lysophosphatidylcholine (LPC) and contributes to supplying choline to the cells. Has a preference for LPC with short (12:0 and 14:0) or polyunsaturated (18:2 and 20:4) fatty acids. In vitro, hydrolyzes only choline-containing lysophospholipids, such as sphingosylphosphorylcholine (SPC), platelet-activating factor (PAF) and lysoPAF, but not other lysophospholipids. The protein is Glycerophosphocholine cholinephosphodiesterase ENPP6 of Rattus norvegicus (Rat).